The chain runs to 265 residues: 5'-nucleotidase SurE (265 aa).

4 residues coordinate a divalent metal cation: aspartate 8, aspartate 9, serine 39, and asparagine 96.

Belongs to the SurE nucleotidase family. The cofactor is a divalent metal cation.

It is found in the cytoplasm. The enzyme catalyses a ribonucleoside 5'-phosphate + H2O = a ribonucleoside + phosphate. In terms of biological role, nucleotidase that shows phosphatase activity on nucleoside 5'-monophosphates. The protein is 5'-nucleotidase SurE of Dehalococcoides mccartyi (strain ATCC BAA-2266 / KCTC 15142 / 195) (Dehalococcoides ethenogenes (strain 195)).